We begin with the raw amino-acid sequence, 338 residues long: Cilia- and flagella-associated protein 36 (338 aa).

Positions 142–179 (ISDLEQEEMKLVSEALRLSKEEYEREQLRRSAKELNCT) form a coiled coil. 2 disordered regions span residues 175-220 (ELNC…ESPY) and 281-314 (KKQE…KKSL). A compositionally biased stretch (polar residues) spans 187 to 202 (KQSNGSERTPSNTELP). Positions 255–330 (NLSQAEKEQL…AEKLKEEVIL (76 aa)) form a coiled coil.

This sequence belongs to the CFAP36 family.

It localises to the nucleus. The protein resides in the cytoplasm. Its subcellular location is the cell projection. The protein localises to the cilium. It is found in the flagellum. The polypeptide is Cilia- and flagella-associated protein 36 (Xenopus laevis (African clawed frog)).